The primary structure comprises 503 residues: Cytochrome P450 7A1 (503 aa).

A helical transmembrane segment spans residues 4–24 (ISLIWGIAVLVSCCIWFIVGI). Cys444 is a binding site for heme.

This sequence belongs to the cytochrome P450 family. Heme serves as cofactor. In terms of tissue distribution, detected in liver (at protein level). Liver.

The protein localises to the endoplasmic reticulum membrane. It is found in the microsome membrane. The catalysed reaction is cholesterol + reduced [NADPH--hemoprotein reductase] + O2 = 7alpha-hydroxycholesterol + oxidized [NADPH--hemoprotein reductase] + H2O + H(+). It carries out the reaction 4beta-hydroxycholesterol + reduced [NADPH--hemoprotein reductase] + O2 = 4beta,7alpha-dihydroxycholesterol + oxidized [NADPH--hemoprotein reductase] + H2O + H(+). The enzyme catalyses lathosterol + reduced [NADPH--hemoprotein reductase] + O2 = 7alpha,8alpha-epoxy-5alpha-cholestan-3beta-ol + oxidized [NADPH--hemoprotein reductase] + H2O + H(+). It catalyses the reaction lathosterol + reduced [NADPH--hemoprotein reductase] + O2 = 5alpha-cholestan-7-oxo-3beta-ol + oxidized [NADPH--hemoprotein reductase] + H2O + H(+). The catalysed reaction is 7-dehydrocholesterol + reduced [NADPH--hemoprotein reductase] + O2 = 7-oxocholesterol + oxidized [NADPH--hemoprotein reductase] + H2O + H(+). It carries out the reaction (24S)-hydroxycholesterol + reduced [NADPH--hemoprotein reductase] + O2 = (24S)-7alpha-dihydroxycholesterol + oxidized [NADPH--hemoprotein reductase] + H2O + H(+). The enzyme catalyses (24R)-hydroxycholesterol + reduced [NADPH--hemoprotein reductase] + O2 = (24R)-7alpha-dihydroxycholesterol + oxidized [NADPH--hemoprotein reductase] + H2O + H(+). It functions in the pathway lipid metabolism; bile acid biosynthesis. It participates in steroid metabolism; cholesterol degradation. A cytochrome P450 monooxygenase involved in the metabolism of endogenous cholesterol and its oxygenated derivatives (oxysterols). Mechanistically, uses molecular oxygen inserting one oxygen atom into a substrate, and reducing the second into a water molecule, with two electrons provided by NADPH via cytochrome P450 reductase (CPR; NADPH-ferrihemoprotein reductase). Functions as a critical regulatory enzyme of bile acid biosynthesis and cholesterol homeostasis. Catalyzes the hydroxylation of carbon hydrogen bond at 7-alpha position of cholesterol, a rate-limiting step in cholesterol catabolism and bile acid biosynthesis. 7-alpha hydroxylates several oxysterols, including 4beta-hydroxycholesterol and 24-hydroxycholesterol. Catalyzes the oxidation of the 7,8 double bond of 7-dehydrocholesterol and lathosterol with direct and predominant formation of the 7-keto derivatives. In Rattus norvegicus (Rat), this protein is Cytochrome P450 7A1 (Cyp7a1).